A 134-amino-acid chain; its full sequence is Protein LctB (134 aa).

The sequence is that of Protein LctB (lctB) from Bacillus caldotenax.